A 152-amino-acid chain; its full sequence is TRAPP-associated protein TCA17 (152 aa).

Belongs to the TRAPP small subunits family. Sedlin subfamily. As to quaternary structure, interacts with the TRAPP II complex; TRAPP II subunits TRS33 and TRS65 are required for this interaction.

Its subcellular location is the golgi apparatus. It localises to the trans-Golgi network. Required, together with the TRAPP II subunit TRS33, for TRAPP II complex assembly or stability, and for proper Golgi localization of TRAPP and the Rab GTPase YPT31. The protein is TRAPP-associated protein TCA17 (TCA17) of Saccharomyces cerevisiae (strain ATCC 204508 / S288c) (Baker's yeast).